The chain runs to 412 residues: uncharacterized protein (412 aa).

Position 49 (His-49) interacts with Zn(2+). The active-site Proton acceptor is Glu-52. 2 residues coordinate Zn(2+): His-53 and Glu-129.

This sequence belongs to the peptidase M16 family. Zn(2+) is required as a cofactor.

This is an uncharacterized protein from Rickettsia felis (strain ATCC VR-1525 / URRWXCal2) (Rickettsia azadi).